A 325-amino-acid chain; its full sequence is Acetyl-coenzyme A carboxylase carboxyl transferase subunit alpha (325 aa).

Positions 44–298 (QLEARADQLR…KAAIQDNLQA (255 aa)) constitute a CoA carboxyltransferase C-terminal domain.

The protein belongs to the AccA family. Acetyl-CoA carboxylase is a heterohexamer composed of biotin carboxyl carrier protein (AccB), biotin carboxylase (AccC) and two subunits each of ACCase subunit alpha (AccA) and ACCase subunit beta (AccD).

The protein resides in the cytoplasm. The catalysed reaction is N(6)-carboxybiotinyl-L-lysyl-[protein] + acetyl-CoA = N(6)-biotinyl-L-lysyl-[protein] + malonyl-CoA. Its pathway is lipid metabolism; malonyl-CoA biosynthesis; malonyl-CoA from acetyl-CoA: step 1/1. In terms of biological role, component of the acetyl coenzyme A carboxylase (ACC) complex. First, biotin carboxylase catalyzes the carboxylation of biotin on its carrier protein (BCCP) and then the CO(2) group is transferred by the carboxyltransferase to acetyl-CoA to form malonyl-CoA. In Picosynechococcus sp. (strain ATCC 27264 / PCC 7002 / PR-6) (Agmenellum quadruplicatum), this protein is Acetyl-coenzyme A carboxylase carboxyl transferase subunit alpha.